A 324-amino-acid chain; its full sequence is Phospho-N-acetylmuramoyl-pentapeptide-transferase (324 aa).

10 consecutive transmembrane segments (helical) span residues 5–25 (AIVI…PLFI), 57–77 (IMIL…IAGL), 81–101 (TYLL…DDMI), 117–137 (FIGQ…SGFS), 147–167 (WSVD…VGGS), 176–196 (LDGL…VLAW), 203–223 (VAVF…FNAH), 227–247 (VFMG…VAVL), 250–270 (LELL…SVII), and 302–322 (IVVT…YIEV).

The protein belongs to the glycosyltransferase 4 family. MraY subfamily. Requires Mg(2+) as cofactor.

The protein resides in the cell membrane. It catalyses the reaction UDP-N-acetyl-alpha-D-muramoyl-L-alanyl-gamma-D-glutamyl-meso-2,6-diaminopimeloyl-D-alanyl-D-alanine + di-trans,octa-cis-undecaprenyl phosphate = di-trans,octa-cis-undecaprenyl diphospho-N-acetyl-alpha-D-muramoyl-L-alanyl-D-glutamyl-meso-2,6-diaminopimeloyl-D-alanyl-D-alanine + UMP. The protein operates within cell wall biogenesis; peptidoglycan biosynthesis. Its function is as follows. Catalyzes the initial step of the lipid cycle reactions in the biosynthesis of the cell wall peptidoglycan: transfers peptidoglycan precursor phospho-MurNAc-pentapeptide from UDP-MurNAc-pentapeptide onto the lipid carrier undecaprenyl phosphate, yielding undecaprenyl-pyrophosphoryl-MurNAc-pentapeptide, known as lipid I. The chain is Phospho-N-acetylmuramoyl-pentapeptide-transferase from Geobacillus kaustophilus (strain HTA426).